We begin with the raw amino-acid sequence, 402 residues long: NADH-quinone oxidoreductase subunit D (402 aa).

The protein belongs to the complex I 49 kDa subunit family. As to quaternary structure, NDH-1 is composed of 14 different subunits. Subunits NuoB, C, D, E, F, and G constitute the peripheral sector of the complex.

Its subcellular location is the cell inner membrane. It carries out the reaction a quinone + NADH + 5 H(+)(in) = a quinol + NAD(+) + 4 H(+)(out). Functionally, NDH-1 shuttles electrons from NADH, via FMN and iron-sulfur (Fe-S) centers, to quinones in the respiratory chain. The immediate electron acceptor for the enzyme in this species is believed to be ubiquinone. Couples the redox reaction to proton translocation (for every two electrons transferred, four hydrogen ions are translocated across the cytoplasmic membrane), and thus conserves the redox energy in a proton gradient. In Nitrobacter winogradskyi (strain ATCC 25391 / DSM 10237 / CIP 104748 / NCIMB 11846 / Nb-255), this protein is NADH-quinone oxidoreductase subunit D.